We begin with the raw amino-acid sequence, 528 residues long: Protein BFR2 (528 aa).

Disordered regions lie at residues 14–158 and 372–401; these read NKSK…ADAK and DSNS…NNAI. Positions 132–146 are enriched in acidic residues; that stretch reads DSGDSDSDSGSDAGE.

Belongs to the AATF family.

It is found in the nucleus. It localises to the nucleolus. The polypeptide is Protein BFR2 (BFR2) (Eremothecium gossypii (strain ATCC 10895 / CBS 109.51 / FGSC 9923 / NRRL Y-1056) (Yeast)).